A 319-amino-acid chain; its full sequence is 4-hydroxy-3-methylbut-2-enyl diphosphate reductase (319 aa).

Cys-12 is a binding site for [4Fe-4S] cluster. 2 residues coordinate (2E)-4-hydroxy-3-methylbut-2-enyl diphosphate: His-41 and His-74. Dimethylallyl diphosphate contacts are provided by His-41 and His-74. Isopentenyl diphosphate contacts are provided by His-41 and His-74. A [4Fe-4S] cluster-binding site is contributed by Cys-96. His-124 provides a ligand contact to (2E)-4-hydroxy-3-methylbut-2-enyl diphosphate. Residue His-124 coordinates dimethylallyl diphosphate. His-124 serves as a coordination point for isopentenyl diphosphate. Residue Glu-126 is the Proton donor of the active site. Residue Thr-167 coordinates (2E)-4-hydroxy-3-methylbut-2-enyl diphosphate. Residue Cys-197 participates in [4Fe-4S] cluster binding. (2E)-4-hydroxy-3-methylbut-2-enyl diphosphate contacts are provided by Ser-225, Ser-226, Asn-227, and Ser-269. The dimethylallyl diphosphate site is built by Ser-225, Ser-226, Asn-227, and Ser-269. Isopentenyl diphosphate contacts are provided by Ser-225, Ser-226, Asn-227, and Ser-269.

It belongs to the IspH family. In terms of assembly, homodimer. Requires [4Fe-4S] cluster as cofactor.

It carries out the reaction isopentenyl diphosphate + 2 oxidized [2Fe-2S]-[ferredoxin] + H2O = (2E)-4-hydroxy-3-methylbut-2-enyl diphosphate + 2 reduced [2Fe-2S]-[ferredoxin] + 2 H(+). It catalyses the reaction dimethylallyl diphosphate + 2 oxidized [2Fe-2S]-[ferredoxin] + H2O = (2E)-4-hydroxy-3-methylbut-2-enyl diphosphate + 2 reduced [2Fe-2S]-[ferredoxin] + 2 H(+). It participates in isoprenoid biosynthesis; dimethylallyl diphosphate biosynthesis; dimethylallyl diphosphate from (2E)-4-hydroxy-3-methylbutenyl diphosphate: step 1/1. The protein operates within isoprenoid biosynthesis; isopentenyl diphosphate biosynthesis via DXP pathway; isopentenyl diphosphate from 1-deoxy-D-xylulose 5-phosphate: step 6/6. Functionally, catalyzes the conversion of 1-hydroxy-2-methyl-2-(E)-butenyl 4-diphosphate (HMBPP) into a mixture of isopentenyl diphosphate (IPP) and dimethylallyl diphosphate (DMAPP). Acts in the terminal step of the DOXP/MEP pathway for isoprenoid precursor biosynthesis. The sequence is that of 4-hydroxy-3-methylbut-2-enyl diphosphate reductase from Buchnera aphidicola subsp. Acyrthosiphon pisum (strain Tuc7).